We begin with the raw amino-acid sequence, 115 residues long: Large ribosomal subunit protein bL19 (115 aa).

It belongs to the bacterial ribosomal protein bL19 family.

This protein is located at the 30S-50S ribosomal subunit interface and may play a role in the structure and function of the aminoacyl-tRNA binding site. This chain is Large ribosomal subunit protein bL19, found in Tolumonas auensis (strain DSM 9187 / NBRC 110442 / TA 4).